A 1488-amino-acid chain; its full sequence is Calmodulin binding protein PICBP (1488 aa).

Disordered regions lie at residues 1-31 (MSNP…RKMW), 63-112 (TAES…SRIS), 280-329 (GPLG…GRSS), and 378-414 (HDHD…EEDG). The span at 18–31 (SSRRVHKRRERKMW) shows a compositional bias: basic residues. The span at 76–86 (DDSRTYSKSSD) shows a compositional bias: basic and acidic residues. The segment covering 98-107 (SVKRRAKSKS) has biased composition (basic residues). Over residues 297-312 (DNVDGDSDEEVFEEEV) the composition is skewed to acidic residues. 2 calmodulin-binding regions span residues 493–592 (TFHM…SLIP) and 831–938 (NSLK…DIVL). Disordered stretches follow at residues 816 to 844 (IPDS…GETK) and 941 to 971 (HDTP…EGCE). Composition is skewed to basic and acidic residues over residues 833-844 (LKEEKEHQGETK) and 954-971 (RNND…EGCE). Residues 1135–1229 (EKRVKGWNNV…SLLAQAFDTI (95 aa)) are calmodulin-binding. Disordered regions lie at residues 1232-1252 (QDMG…ISRQ) and 1316-1340 (EKNQ…DTSV). Low complexity predominate over residues 1235 to 1252 (GSGSTPGSAASSRNISRQ). Positions 1316 to 1328 (EKNQTLPEETRKE) are enriched in basic and acidic residues. The tract at residues 1379–1483 (RQKSETLQVS…QLLVQAFESL (105 aa)) is calmodulin-binding.

Its function is as follows. Binds calmodulin in a calcium-dependent manner in vitro. May play a role in general plant defense including R gene-mediated responses. This Arabidopsis thaliana (Mouse-ear cress) protein is Calmodulin binding protein PICBP.